A 319-amino-acid polypeptide reads, in one-letter code: Acetyl-coenzyme A carboxylase carboxyl transferase subunit alpha (319 aa).

One can recognise a CoA carboxyltransferase C-terminal domain in the interval 39–293 (KLEKKVDRMR…HEAIARQLKE (255 aa)).

Belongs to the AccA family. In terms of assembly, acetyl-CoA carboxylase is a heterohexamer composed of biotin carboxyl carrier protein (AccB), biotin carboxylase (AccC) and two subunits each of ACCase subunit alpha (AccA) and ACCase subunit beta (AccD).

The protein localises to the cytoplasm. The catalysed reaction is N(6)-carboxybiotinyl-L-lysyl-[protein] + acetyl-CoA = N(6)-biotinyl-L-lysyl-[protein] + malonyl-CoA. It participates in lipid metabolism; malonyl-CoA biosynthesis; malonyl-CoA from acetyl-CoA: step 1/1. Component of the acetyl coenzyme A carboxylase (ACC) complex. First, biotin carboxylase catalyzes the carboxylation of biotin on its carrier protein (BCCP) and then the CO(2) group is transferred by the carboxyltransferase to acetyl-CoA to form malonyl-CoA. In Geobacter sulfurreducens (strain ATCC 51573 / DSM 12127 / PCA), this protein is Acetyl-coenzyme A carboxylase carboxyl transferase subunit alpha.